A 194-amino-acid polypeptide reads, in one-letter code: Methylthioribulose-1-phosphate dehydratase (194 aa).

His-84 and His-86 together coordinate Zn(2+).

Belongs to the aldolase class II family. MtnB subfamily. The cofactor is Zn(2+).

The enzyme catalyses 5-(methylsulfanyl)-D-ribulose 1-phosphate = 5-methylsulfanyl-2,3-dioxopentyl phosphate + H2O. Its pathway is amino-acid biosynthesis; L-methionine biosynthesis via salvage pathway; L-methionine from S-methyl-5-thio-alpha-D-ribose 1-phosphate: step 2/6. In terms of biological role, catalyzes the dehydration of methylthioribulose-1-phosphate (MTRu-1-P) into 2,3-diketo-5-methylthiopentyl-1-phosphate (DK-MTP-1-P). This chain is Methylthioribulose-1-phosphate dehydratase, found in Cronobacter sakazakii (Enterobacter sakazakii).